The chain runs to 902 residues: Cytosolic 10-formyltetrahydrofolate dehydrogenase (902 aa).

The hydrolase domain stretch occupies residues 1–310; that stretch reads MKIAVIGQSL…LASNFFKGAA (310 aa). S9 bears the Phosphoserine mark. Residue K38 is modified to N6-succinyllysine. 88-90 serves as a coordination point for (6R)-10-formyltetrahydrofolate; that stretch reads QFI. H106 functions as the Proton donor in the catalytic mechanism. A (6R)-10-formyltetrahydrofolate-binding site is contributed by D142. The Carrier domain occupies 318–395; that stretch reads EAELVTAEAV…DFIQLLVRKL (78 aa). O-(pantetheine 4'-phosphoryl)serine is present on S354. An aldehyde dehydrogenase domain region spans residues 417–902; it reads TIRIPHQLFI…LRVKTVTFEY (486 aa). Residues 571-573 and 597-600 each bind NADP(+); these read IPW and KPAQ. Residues S629 and S631 each carry the phosphoserine modification. Residues 630–635 and 650–651 contribute to the NADP(+) site; these read GSLVGQ and GS. N6-succinyllysine is present on K660. E673 serves as the catalytic Proton acceptor. Residue 673 to 674 participates in NADP(+) binding; that stretch reads EL. The active-site Proton donor is C707. K757 is an NADP(+) binding site. K767 carries the N6-succinyllysine modification. An NADP(+)-binding site is contributed by 804–806; the sequence is ESF. Position 825 is a phosphoserine (S825). Residue K882 is modified to N6-acetyllysine.

The protein in the N-terminal section; belongs to the GART family. It in the C-terminal section; belongs to the aldehyde dehydrogenase family. ALDH1L subfamily. As to quaternary structure, homotetramer. Post-translationally, phosphopantetheinylation at Ser-354 by AASDHPPT is required for the formyltetrahydrofolate dehydrogenase activity.

It is found in the cytoplasm. The protein resides in the cytosol. The catalysed reaction is (6R)-10-formyltetrahydrofolate + NADP(+) + H2O = (6S)-5,6,7,8-tetrahydrofolate + CO2 + NADPH + H(+). Cytosolic 10-formyltetrahydrofolate dehydrogenase that catalyzes the NADP(+)-dependent conversion of 10-formyltetrahydrofolate to tetrahydrofolate and carbon dioxide. May also have an NADP(+)-dependent aldehyde dehydrogenase activity towards formaldehyde, acetaldehyde, propionaldehyde, and benzaldehyde. This chain is Cytosolic 10-formyltetrahydrofolate dehydrogenase, found in Pongo abelii (Sumatran orangutan).